The chain runs to 194 residues: Ribonuclease VapC1 (194 aa).

The PINc domain occupies Tyr34 to Ala134. Asp37 and Asp150 together coordinate Mg(2+).

This sequence belongs to the PINc/VapC protein family. The cofactor is Mg(2+).

Its function is as follows. Toxic component of a type II toxin-antitoxin (TA) system. An RNase. This chain is Ribonuclease VapC1, found in Thermoplasma acidophilum (strain ATCC 25905 / DSM 1728 / JCM 9062 / NBRC 15155 / AMRC-C165).